Reading from the N-terminus, the 168-residue chain is Aphid transmission protein (168 aa).

This sequence belongs to the caulimoviridae ORF II family.

Functionally, this protein is involved in virus transmission. The sequence is that of Aphid transmission protein from Carnation etched ring virus (CERV).